Reading from the N-terminus, the 385-residue chain is MAVPPSAPVPCSPFYLRRQEPCPQCSWSMEEKAVASAGCWEPPGPPRAAVPCFSVTVEQDDILPGALRLIRELRPHWKPEQVRTKRFKDGITNKLLACYVEEDMRDCVLVRVYGERTELLVDRENEVRNFQLLRAHGCAPKLYCTFQNGLCYEYVQGVALGPEHIREPQLFRLIALEMAKIHTIHANGSLPKPTLWHKMHRYFTLVKDEISPSLSADVPKVEVLEQELAWLKEHLSQLDSPVVFCHNDLLCKNIIYDSDKGRVCFIDYEYAGYNYQAFDIGNHFNEFAGVNVVDYSRYPARETQVQWLRYYLEAQKGTAASPREVERLYAQVNKFALASHFFWALWALIQNQYSTISFDFLRYAVIRFNQYFKVKPQVSALEMPK.

It belongs to the choline/ethanolamine kinase family. Expressed in testis and liver. Low expression in ovary and kidney.

It carries out the reaction ethanolamine + ATP = phosphoethanolamine + ADP + H(+). The protein operates within phospholipid metabolism; phosphatidylethanolamine biosynthesis; phosphatidylethanolamine from ethanolamine: step 1/3. Its function is as follows. Highly specific for ethanolamine phosphorylation. Does not have choline kinase activity. In Mus musculus (Mouse), this protein is Ethanolamine kinase 2 (Etnk2).